The sequence spans 316 residues: tRNA-cytidine(32) 2-sulfurtransferase (316 aa).

The short motif at 58–63 (SGGKDS) is the PP-loop motif element. Residues cysteine 133, cysteine 136, and cysteine 224 each contribute to the [4Fe-4S] cluster site.

Belongs to the TtcA family. In terms of assembly, homodimer. Mg(2+) is required as a cofactor. It depends on [4Fe-4S] cluster as a cofactor.

The protein localises to the cytoplasm. The enzyme catalyses cytidine(32) in tRNA + S-sulfanyl-L-cysteinyl-[cysteine desulfurase] + AH2 + ATP = 2-thiocytidine(32) in tRNA + L-cysteinyl-[cysteine desulfurase] + A + AMP + diphosphate + H(+). It functions in the pathway tRNA modification. In terms of biological role, catalyzes the ATP-dependent 2-thiolation of cytidine in position 32 of tRNA, to form 2-thiocytidine (s(2)C32). The sulfur atoms are provided by the cysteine/cysteine desulfurase (IscS) system. The chain is tRNA-cytidine(32) 2-sulfurtransferase from Aromatoleum aromaticum (strain DSM 19018 / LMG 30748 / EbN1) (Azoarcus sp. (strain EbN1)).